A 429-amino-acid chain; its full sequence is Glutamate-1-semialdehyde 2,1-aminomutase 1 (429 aa).

At K268 the chain carries N6-(pyridoxal phosphate)lysine.

Belongs to the class-III pyridoxal-phosphate-dependent aminotransferase family. HemL subfamily. Homodimer. It depends on pyridoxal 5'-phosphate as a cofactor.

The protein resides in the cytoplasm. The enzyme catalyses (S)-4-amino-5-oxopentanoate = 5-aminolevulinate. Its pathway is porphyrin-containing compound metabolism; protoporphyrin-IX biosynthesis; 5-aminolevulinate from L-glutamyl-tRNA(Glu): step 2/2. The polypeptide is Glutamate-1-semialdehyde 2,1-aminomutase 1 (Staphylococcus haemolyticus (strain JCSC1435)).